The sequence spans 341 residues: Limbic system-associated membrane protein (341 aa).

The signal sequence occupies residues 1 to 28 (MVGRVQPDRKQLPLVLLRLLCLLPTGLP). Ig-like domains lie at 29 to 122 (VRSV…PKTS), 132 to 214 (PKIS…VKVT), and 219 to 304 (PTIT…ASLV). Asn-40 and Asn-66 each carry an N-linked (GlcNAc...) asparagine glycan. Cys-53 and Cys-111 are disulfide-bonded. Position 94 is a phosphotyrosine (Tyr-94). 2 N-linked (GlcNAc...) asparagine glycosylation sites follow: Asn-136 and Asn-148. Cystine bridges form between Cys-153-Cys-197 and Cys-239-Cys-290. N-linked (GlcNAc...) asparagine glycans are attached at residues Asn-279, Asn-287, and Asn-300.

This sequence belongs to the immunoglobulin superfamily. IgLON family.

It localises to the cell membrane. In terms of biological role, mediates selective neuronal growth and axon targeting. Contributes to the guidance of developing axons and remodeling of mature circuits in the limbic system. Essential for normal growth of the hippocampal mossy fiber projection. This Mus musculus (Mouse) protein is Limbic system-associated membrane protein (Lsamp).